The sequence spans 350 residues: Ion-translocating oxidoreductase complex subunit D (350 aa).

4 helical membrane-spanning segments follow: residues 20 to 40 (VMLW…LFFG), 42 to 62 (GNLI…AAFL), 89 to 109 (LPQF…IVVA), and 120 to 140 (PFNP…VAMT). Residue Thr178 is modified to FMN phosphoryl threonine. Transmembrane regions (helical) follow at residues 204–224 (LIAR…VLLI), 228–248 (IITW…SLAF), 255–275 (YAPL…FFIA), 282–302 (ATSH…VYLI), and 306–326 (GNYP…VPFI).

It belongs to the NqrB/RnfD family. The complex is composed of six subunits: RnfA, RnfB, RnfC, RnfD, RnfE and RnfG. The cofactor is FMN.

The protein localises to the cell inner membrane. Functionally, part of a membrane-bound complex that couples electron transfer with translocation of ions across the membrane. In Marinobacter nauticus (strain ATCC 700491 / DSM 11845 / VT8) (Marinobacter aquaeolei), this protein is Ion-translocating oxidoreductase complex subunit D.